A 236-amino-acid polypeptide reads, in one-letter code: 2,3,4,5-tetrahydropyridine-2,6-dicarboxylate N-acetyltransferase (236 aa).

This sequence belongs to the transferase hexapeptide repeat family. DapH subfamily.

The enzyme catalyses (S)-2,3,4,5-tetrahydrodipicolinate + acetyl-CoA + H2O = L-2-acetamido-6-oxoheptanedioate + CoA. It functions in the pathway amino-acid biosynthesis; L-lysine biosynthesis via DAP pathway; LL-2,6-diaminopimelate from (S)-tetrahydrodipicolinate (acetylase route): step 1/3. Its function is as follows. Catalyzes the transfer of an acetyl group from acetyl-CoA to tetrahydrodipicolinate. The protein is 2,3,4,5-tetrahydropyridine-2,6-dicarboxylate N-acetyltransferase of Clostridium botulinum (strain ATCC 19397 / Type A).